A 304-amino-acid polypeptide reads, in one-letter code: Ribosomal protein L11 methyltransferase (304 aa).

The S-adenosyl-L-methionine site is built by T155, G176, D198, and N239.

The protein belongs to the methyltransferase superfamily. PrmA family.

It is found in the cytoplasm. It catalyses the reaction L-lysyl-[protein] + 3 S-adenosyl-L-methionine = N(6),N(6),N(6)-trimethyl-L-lysyl-[protein] + 3 S-adenosyl-L-homocysteine + 3 H(+). Methylates ribosomal protein L11. In Caldicellulosiruptor bescii (strain ATCC BAA-1888 / DSM 6725 / KCTC 15123 / Z-1320) (Anaerocellum thermophilum), this protein is Ribosomal protein L11 methyltransferase.